We begin with the raw amino-acid sequence, 230 residues long: Type II restriction enzyme SinI (230 aa).

The catalysed reaction is Endonucleolytic cleavage of DNA to give specific double-stranded fragments with terminal 5'-phosphates.. Functionally, a P subtype restriction enzyme that recognizes the double-stranded sequence 5'-GGWCC-3' and cleaves after G-1. This is Type II restriction enzyme SinI (sinIR) from Salmonella infantis.